Reading from the N-terminus, the 237-residue chain is Large ribosomal subunit protein uL22m (237 aa).

It belongs to the universal ribosomal protein uL22 family.

It is found in the mitochondrion. This chain is Large ribosomal subunit protein uL22m (mrpl22), found in Dictyostelium discoideum (Social amoeba).